A 162-amino-acid chain; its full sequence is Troponin C, skeletal muscle (162 aa).

EF-hand domains follow at residues 17 to 52 (EMIAEFKAAFDMFDADGGGDISTKELGTVMRMLGQN), 53 to 88 (PTKEELDAIIEEVDEDGSGTIDFEEFLVMMVRQMKE), 93 to 128 (KSEEELANCFRIFDKNADGFIDIEELGEILRATGEH), and 129 to 162 (VTEEEIEDLMKDSDKNNDGRIDFDEFLKMMEGVQ). Residues D30, D32, D36, E41, D66, D68, S70, T72, E77, D106, N108, D110, E117, D142, N144, D146, R148, and E153 each contribute to the Ca(2+) site.

Belongs to the troponin C family.

Its function is as follows. Troponin is the central regulatory protein of striated muscle contraction. Tn consists of three components: Tn-I which is the inhibitor of actomyosin ATPase, Tn-T which contains the binding site for tropomyosin and Tn-C. The binding of calcium to Tn-C abolishes the inhibitory action of Tn on actin filaments. In Meleagris gallopavo (Wild turkey), this protein is Troponin C, skeletal muscle (TNNC2).